We begin with the raw amino-acid sequence, 369 residues long: Anhydro-N-acetylmuramic acid kinase (369 aa).

Residue 12 to 19 (GTSMDGVD) coordinates ATP.

It belongs to the anhydro-N-acetylmuramic acid kinase family.

The catalysed reaction is 1,6-anhydro-N-acetyl-beta-muramate + ATP + H2O = N-acetyl-D-muramate 6-phosphate + ADP + H(+). The protein operates within amino-sugar metabolism; 1,6-anhydro-N-acetylmuramate degradation. It functions in the pathway cell wall biogenesis; peptidoglycan recycling. Its function is as follows. Catalyzes the specific phosphorylation of 1,6-anhydro-N-acetylmuramic acid (anhMurNAc) with the simultaneous cleavage of the 1,6-anhydro ring, generating MurNAc-6-P. Is required for the utilization of anhMurNAc either imported from the medium or derived from its own cell wall murein, and thus plays a role in cell wall recycling. This Shewanella putrefaciens (strain CN-32 / ATCC BAA-453) protein is Anhydro-N-acetylmuramic acid kinase.